The sequence spans 162 residues: Cyclic pyranopterin monophosphate synthase (162 aa).

Substrate is bound by residues 75–77 (MCH) and 116–117 (ME). Aspartate 131 is a catalytic residue.

The protein belongs to the MoaC family. Homohexamer; trimer of dimers.

The catalysed reaction is (8S)-3',8-cyclo-7,8-dihydroguanosine 5'-triphosphate = cyclic pyranopterin phosphate + diphosphate. It functions in the pathway cofactor biosynthesis; molybdopterin biosynthesis. Catalyzes the conversion of (8S)-3',8-cyclo-7,8-dihydroguanosine 5'-triphosphate to cyclic pyranopterin monophosphate (cPMP). In Staphylococcus epidermidis (strain ATCC 35984 / DSM 28319 / BCRC 17069 / CCUG 31568 / BM 3577 / RP62A), this protein is Cyclic pyranopterin monophosphate synthase.